The chain runs to 489 residues: N-succinylglutamate 5-semialdehyde dehydrogenase (489 aa).

Residue Gly-223–Gly-228 participates in NAD(+) binding. Active-site residues include Glu-246 and Cys-280.

This sequence belongs to the aldehyde dehydrogenase family. AstD subfamily.

The catalysed reaction is N-succinyl-L-glutamate 5-semialdehyde + NAD(+) + H2O = N-succinyl-L-glutamate + NADH + 2 H(+). It functions in the pathway amino-acid degradation; L-arginine degradation via AST pathway; L-glutamate and succinate from L-arginine: step 4/5. In terms of biological role, catalyzes the NAD-dependent reduction of succinylglutamate semialdehyde into succinylglutamate. This chain is N-succinylglutamate 5-semialdehyde dehydrogenase, found in Idiomarina loihiensis (strain ATCC BAA-735 / DSM 15497 / L2-TR).